The following is a 356-amino-acid chain: D-amino-acid oxidase (356 aa).

The N-terminal stretch at 1–17 (MAKIVVIGAGVAGLTTA) is a signal peptide. FAD contacts are provided by A9, S44, G48, and N50. Residue F54 participates in anthranilate binding. V171 provides a ligand contact to FAD. N192 carries an N-linked (GlcNAc...) asparagine glycan. Y243 provides a ligand contact to anthranilate. Residue Y243 participates in (R)-lactate binding. N-linked (GlcNAc...) asparagine glycosylation occurs at N262. FAD-binding residues include R302, A329, G332, Y333, and Q334. R302 contributes to the anthranilate binding site. Position 302 (R302) interacts with (R)-lactate.

The protein belongs to the DAMOX/DASOX family. The cofactor is FAD.

The protein localises to the peroxisome matrix. The enzyme catalyses a D-alpha-amino acid + O2 + H2O = a 2-oxocarboxylate + H2O2 + NH4(+). The catalysed reaction is D-alanine + O2 + H2O = pyruvate + H2O2 + NH4(+). It catalyses the reaction D-serine + O2 + H2O = 3-hydroxypyruvate + H2O2 + NH4(+). It carries out the reaction D-phenylalanine + O2 + H2O = 3-phenylpyruvate + H2O2 + NH4(+). The enzyme catalyses D-lysine + O2 + H2O = 6-amino-2-oxohexanoate + H2O2 + NH4(+). The catalysed reaction is D-tyrosine + O2 + H2O = 3-(4-hydroxyphenyl)pyruvate + H2O2 + NH4(+). It catalyses the reaction D-methionine + O2 + H2O = 4-methylsulfanyl-2-oxobutanoate + H2O2 + NH4(+). It carries out the reaction D-tryptophan + O2 + H2O = indole-3-pyruvate + H2O2 + NH4(+). The enzyme catalyses D-leucine + O2 + H2O = 4-methyl-2-oxopentanoate + H2O2 + NH4(+). The catalysed reaction is D-valine + O2 + H2O = 3-methyl-2-oxobutanoate + H2O2 + NH4(+). Inhibited by benzoate and hypochlorite. Catalyzes the oxidative deamination of D-amino acids with broad substrate specificity. Enables the organism to utilize D-amino acids as a source of nutrients. This chain is D-amino-acid oxidase, found in Trigonopsis variabilis (Yeast).